A 115-amino-acid polypeptide reads, in one-letter code: Large ribosomal subunit protein uL18 (115 aa).

It belongs to the universal ribosomal protein uL18 family. Part of the 50S ribosomal subunit; part of the 5S rRNA/L5/L18/L25 subcomplex. Contacts the 5S and 23S rRNAs.

This is one of the proteins that bind and probably mediate the attachment of the 5S RNA into the large ribosomal subunit, where it forms part of the central protuberance. This is Large ribosomal subunit protein uL18 from Mycoplasma genitalium (strain ATCC 33530 / DSM 19775 / NCTC 10195 / G37) (Mycoplasmoides genitalium).